Reading from the N-terminus, the 391-residue chain is Probable dual-specificity RNA methyltransferase RlmN (391 aa).

The disordered stretch occupies residues 1–33; sequence MTTPLDTPTREPLPLAPAGPGKLVMSAPRRGKP. Residues 12 to 21 show a composition bias toward low complexity; that stretch reads PLPLAPAGPG. The active-site Proton acceptor is Glu-124. In terms of domain architecture, Radical SAM core spans 130-373; the sequence is YKNRDTICIS…TTVRDTRGSD (244 aa). Residues Cys-137 and Cys-378 are joined by a disulfide bond. The [4Fe-4S] cluster site is built by Cys-144, Cys-148, and Cys-151. S-adenosyl-L-methionine-binding positions include 199–200, Ser-233, 256–258, and Asn-335; these read GE and SLH. The active-site S-methylcysteine intermediate is the Cys-378.

It belongs to the radical SAM superfamily. RlmN family. [4Fe-4S] cluster serves as cofactor.

Its subcellular location is the cytoplasm. The enzyme catalyses adenosine(2503) in 23S rRNA + 2 reduced [2Fe-2S]-[ferredoxin] + 2 S-adenosyl-L-methionine = 2-methyladenosine(2503) in 23S rRNA + 5'-deoxyadenosine + L-methionine + 2 oxidized [2Fe-2S]-[ferredoxin] + S-adenosyl-L-homocysteine. The catalysed reaction is adenosine(37) in tRNA + 2 reduced [2Fe-2S]-[ferredoxin] + 2 S-adenosyl-L-methionine = 2-methyladenosine(37) in tRNA + 5'-deoxyadenosine + L-methionine + 2 oxidized [2Fe-2S]-[ferredoxin] + S-adenosyl-L-homocysteine. Functionally, specifically methylates position 2 of adenine 2503 in 23S rRNA and position 2 of adenine 37 in tRNAs. The sequence is that of Probable dual-specificity RNA methyltransferase RlmN from Kineococcus radiotolerans (strain ATCC BAA-149 / DSM 14245 / SRS30216).